The sequence spans 106 residues: UPF0473 protein SSU98_0068 (106 aa).

The protein belongs to the UPF0473 family.

This Streptococcus suis (strain 98HAH33) protein is UPF0473 protein SSU98_0068.